The primary structure comprises 279 residues: Pantothenate synthetase (279 aa).

27–34 (MGYLHEGH) contributes to the ATP binding site. Residue H34 is the Proton donor of the active site. Q58 contributes to the (R)-pantoate binding site. Position 58 (Q58) interacts with beta-alanine. 144-147 (GKKD) contacts ATP. Residue Q150 participates in (R)-pantoate binding. ATP is bound by residues V173 and 181–184 (MSSR).

Belongs to the pantothenate synthetase family. Homodimer.

It is found in the cytoplasm. It catalyses the reaction (R)-pantoate + beta-alanine + ATP = (R)-pantothenate + AMP + diphosphate + H(+). It functions in the pathway cofactor biosynthesis; (R)-pantothenate biosynthesis; (R)-pantothenate from (R)-pantoate and beta-alanine: step 1/1. Functionally, catalyzes the condensation of pantoate with beta-alanine in an ATP-dependent reaction via a pantoyl-adenylate intermediate. This is Pantothenate synthetase from Citrifermentans bemidjiense (strain ATCC BAA-1014 / DSM 16622 / JCM 12645 / Bem) (Geobacter bemidjiensis).